The chain runs to 500 residues: L-arabinose isomerase (500 aa).

Mn(2+) contacts are provided by glutamate 306, glutamate 333, histidine 350, and histidine 450.

Belongs to the arabinose isomerase family. As to quaternary structure, homohexamer. Requires Mn(2+) as cofactor.

It carries out the reaction beta-L-arabinopyranose = L-ribulose. The protein operates within carbohydrate degradation; L-arabinose degradation via L-ribulose; D-xylulose 5-phosphate from L-arabinose (bacterial route): step 1/3. Its function is as follows. Catalyzes the conversion of L-arabinose to L-ribulose. The protein is L-arabinose isomerase of Escherichia coli O139:H28 (strain E24377A / ETEC).